Reading from the N-terminus, the 2237-residue chain is Activating signal cointegrator 1 complex subunit 3-like (2237 aa).

4 disordered regions span residues 1–48 (MSEE…RGEM), 71–118 (TIEK…KPID), 242–330 (DEEE…SKLI), and 445–472 (EKTIEKTESNKKDVEMKQQQQQQQDEIK). Residues 24–37 (ERNRSELKEPKGEP) are compositionally biased toward basic and acidic residues. Over residues 79-97 (VNSSNDTYSTTKKVKNQNP) the composition is skewed to polar residues. Positions 105-114 (RKSNGNNNNE) are enriched in low complexity. The segment covering 242–282 (DEEEEEENLSDFEIRDDDDDDDDVDNNEVDDNNNNDSEAQD) has biased composition (acidic residues). 2 stretches are compositionally biased toward basic and acidic residues: residues 312–325 (QKPDTKNTKDDKNN) and 446–460 (KTIEKTESNKKDVEM). A coiled-coil region spans residues 440-468 (TAATTEKTIEKTESNKKDVEMKQQQQQQQ). One can recognise a Helicase ATP-binding 1 domain in the interval 561–745 (DCAFKTDNNL…FLRVEPDGVF (185 aa)). Position 574 to 581 (574 to 581 (APTSSGKT)) interacts with ATP. Positions 687-690 (DEIH) match the DEAH box motif. The region spanning 755 to 990 (PLEQQYIGIS…TVRDAVNWLG (236 aa)) is the Helicase C-terminal 1 domain. Positions 1050–1356 (STELGKVASH…GAEYSLPISF (307 aa)) constitute an SEC63 1 domain. A Helicase ATP-binding 2 domain is found at 1407–1584 (NCMYQSNDNA…WIGATPQTCY (178 aa)). 1420–1427 (APTNSGKT) contacts ATP. Positions 1526 to 1529 (DELH) match the DEAH box motif. Positions 1657-1832 (TLTKPYLVCE…TITKKQDALD (176 aa)) constitute a Helicase C-terminal 2 domain. Residues 1892–2215 (PLNLGIIASY…GCDQEHELNI (324 aa)) form the SEC63 2 domain.

Belongs to the helicase family.

This is Activating signal cointegrator 1 complex subunit 3-like (ascc3l) from Dictyostelium discoideum (Social amoeba).